The sequence spans 372 residues: MAGGVMDKEYVGFAALPNQLHRKSVKKGFDFTLMVAGESGLGKSTLINSLFLTNLYEDRQVPEASARLTQTLAIERRGVEIEEGGVKVKLTLVDTPGFGDSVDCSDCWLPVVKFIEEQFEQYLRDESGLNRKNIQDSRVHCCLYFISPFGRGLRPLDVAFLRAVHEKVNIIPVIGKADALMPQETQALKQKIRDQLKEEEIHIYQFPECDSDEDEDFKRQDAEMKESIPFAVVGSCEVVRDGGNRPVRGRRYSWGTVEVENPHHCDFLNLRRMLVQTHLQDLKEVTHDLLYEGYRARCLQSLARPGARDRASRSKLSRQSATEIPLPMLPLADTEKLIREKDEELRRMQEMLEKMQAQMQQSQAQGEQSDAL.

The Septin-type G domain occupies 27 to 301 (KGFDFTLMVA…EGYRARCLQS (275 aa)). Positions 37-44 (GESGLGKS) are G1 motif. GTP is bound by residues 37 to 44 (GESGLGKS), T71, G97, and 176 to 184 (KADALMPQE). Residues 94-97 (DTPG) form a G3 motif region. The segment at 175–178 (GKAD) is G4 motif. S211 carries the post-translational modification Phosphoserine. GTP is bound by residues G234 and R250. S253 is subject to Phosphoserine; by AURKB. The residue at position 256 (T256) is a Phosphothreonine. S312 and S320 each carry phosphoserine; by AURKB. A disordered region spans residues 352–372 (LEKMQAQMQQSQAQGEQSDAL). Over residues 355 to 372 (MQAQMQQSQAQGEQSDAL) the composition is skewed to low complexity.

Belongs to the TRAFAC class TrmE-Era-EngA-EngB-Septin-like GTPase superfamily. Septin GTPase family. Septins polymerize into heterooligomeric protein complexes that form filaments, and can associate with cellular membranes, actin filaments and microtubules. GTPase activity is required for filament formation. Interacts with AURKB. Expressed at high levels in lymphoid and hematopoietic tissues.

It localises to the cytoplasm. The protein localises to the cytoskeleton. It is found in the microtubule organizing center. The protein resides in the centrosome. Its subcellular location is the midbody. Filament-forming cytoskeletal GTPase. May play a role in cytokinesis (Potential). In Homo sapiens (Human), this protein is Septin-1.